Reading from the N-terminus, the 387-residue chain is Postreplication repair E3 ubiquitin-protein ligase rad18 (387 aa).

The RING-type zinc finger occupies 29–67; sequence CLICHEYFRAPLITSCSHTFCSFCIRDYLREHPMCPACR. The segment at 119–153 is disordered; that stretch reads DSASGDEEWEDDLASNSSPASIAKKTSRDSKKRKR. Acidic residues predominate over residues 122–131; that stretch reads SGDEEWEDDL. The segment at 156 to 183 adopts a UBZ4-type zinc-finger fold; sequence LVHCPACSNLVPHNQINQHLDSCLNSPS. Zn(2+)-binding residues include Cys159, Cys162, His174, and Cys178. The disordered stretch occupies residues 174–206; that stretch reads HLDSCLNSPSSPSSSSSPYKNKDNSKSNSLLSF. A compositionally biased stretch (low complexity) spans 177–192; sequence SCLNSPSSPSSSSSPY. One can recognise an SAP domain in the interval 240–274; it reads YALLSESKIRSKLSEMGLPTDGHKQLLQRRHAKWV. The tract at residues 335 to 387 is disordered; sequence KQSTTNKNDSLRNTAVESSTEPSTSNGFPATSVSPPLTIDLTNSQTGSDGPQS.

The protein belongs to the RAD18 family. As to quaternary structure, interacts with E2 ubc2, forming a complex with ubiquitin ligase activity.

Its subcellular location is the nucleus. It catalyses the reaction S-ubiquitinyl-[E2 ubiquitin-conjugating enzyme]-L-cysteine + [acceptor protein]-L-lysine = [E2 ubiquitin-conjugating enzyme]-L-cysteine + N(6)-ubiquitinyl-[acceptor protein]-L-lysine.. Its pathway is protein modification; protein ubiquitination. Functionally, E3 RING-finger protein, member of the UBC2/RAD6 epistasis group. Associates to the E2 ubiquitin conjugating enzyme ubc2/rad6 to form the ubc2-rad18 ubiquitin ligase complex involved in postreplicative repair (PRR) of damaged DNA. This Schizosaccharomyces pombe (strain 972 / ATCC 24843) (Fission yeast) protein is Postreplication repair E3 ubiquitin-protein ligase rad18 (rhp18).